Here is a 498-residue protein sequence, read N- to C-terminus: Probable cytosol aminopeptidase (498 aa).

2 residues coordinate Mn(2+): lysine 269 and aspartate 274. The active site involves lysine 281. Mn(2+) contacts are provided by aspartate 292, aspartate 351, and glutamate 353. Arginine 355 is an active-site residue.

This sequence belongs to the peptidase M17 family. Requires Mn(2+) as cofactor.

The protein localises to the cytoplasm. It carries out the reaction Release of an N-terminal amino acid, Xaa-|-Yaa-, in which Xaa is preferably Leu, but may be other amino acids including Pro although not Arg or Lys, and Yaa may be Pro. Amino acid amides and methyl esters are also readily hydrolyzed, but rates on arylamides are exceedingly low.. It catalyses the reaction Release of an N-terminal amino acid, preferentially leucine, but not glutamic or aspartic acids.. Functionally, presumably involved in the processing and regular turnover of intracellular proteins. Catalyzes the removal of unsubstituted N-terminal amino acids from various peptides. The chain is Probable cytosol aminopeptidase from Glaesserella parasuis serovar 5 (strain SH0165) (Haemophilus parasuis).